A 221-amino-acid polypeptide reads, in one-letter code: Probable chemoreceptor glutamine deamidase CheD 1 (221 aa).

It belongs to the CheD family.

It carries out the reaction L-glutaminyl-[protein] + H2O = L-glutamyl-[protein] + NH4(+). Its function is as follows. Probably deamidates glutamine residues to glutamate on methyl-accepting chemotaxis receptors (MCPs), playing an important role in chemotaxis. The sequence is that of Probable chemoreceptor glutamine deamidase CheD 1 from Methanosarcina mazei (strain ATCC BAA-159 / DSM 3647 / Goe1 / Go1 / JCM 11833 / OCM 88) (Methanosarcina frisia).